A 504-amino-acid chain; its full sequence is Lysine--tRNA ligase (504 aa).

Glu411 and Glu418 together coordinate Mg(2+).

This sequence belongs to the class-II aminoacyl-tRNA synthetase family. In terms of assembly, homodimer. Mg(2+) is required as a cofactor.

The protein resides in the cytoplasm. The catalysed reaction is tRNA(Lys) + L-lysine + ATP = L-lysyl-tRNA(Lys) + AMP + diphosphate. This Clostridium botulinum (strain ATCC 19397 / Type A) protein is Lysine--tRNA ligase.